We begin with the raw amino-acid sequence, 1171 residues long: Structural maintenance of chromosomes protein 2-2 (1171 aa).

Positions 2–1158 (HIKEICLEGF…DVLFRTKFVD (1157 aa)) constitute a Zinc-hook domain. 32–39 (GLNGSGKS) provides a ligand contact to ATP. The stretch at 172 to 510 (RMYENKKEAA…LANVQFTYRD (339 aa)) forms a coiled coil. An SMC hinge domain is found at 518 to 635 (SKVKGVVAKL…KTTDAAKEVA (118 aa)). Positions 674–1026 (HDLAEAETKF…LDEKKKETLK (353 aa)) form a coiled coil.

The protein belongs to the SMC family. SMC2 subfamily. As to quaternary structure, forms a heterodimer with SMC4. Component of the condensin complex, which contains the SMC2 and SMC4 heterodimer, and three non SMC subunits that probably regulate the complex: CAPH, CAPD2 and CAPG. Highly expressed in roots and young floral buds.

It localises to the nucleus. In terms of biological role, central component of the condensin complex, a complex required for conversion of interphase chromatin into mitotic-like condense chromosomes. The condensin complex probably introduces positive supercoils into relaxed DNA in the presence of type I topoisomerases and converts nicked DNA into positive knotted forms in the presence of type II topoisomerases. Also involved in chromosome segregation in meiosis. This Arabidopsis thaliana (Mouse-ear cress) protein is Structural maintenance of chromosomes protein 2-2 (SMC2-2).